The chain runs to 61 residues: LQVLTEEVGSIDSPVGEHQQPGGESMRLPEHFRFKRXSHLSLCRWCCNCCHNKGXGFCCKF.

The disordered stretch occupies residues 1-24 (LQVLTEEVGSIDSPVGEHQQPGGE). The propeptide occupies 1–34 (LQVLTEEVGSIDSPVGEHQQPGGESMRLPEHFRF). Cystine bridges form between Cys-43–Cys-59, Cys-46–Cys-49, Cys-47–Xaa-55, and Cys-50–Cys-58.

This sequence belongs to the hepcidin family.

The protein localises to the secreted. In terms of biological role, seems to act as a signaling molecule involved in the maintenance of iron homeostasis. Seems to be required in conjunction with HFE to regulate both intestinal iron absorption and iron storage in macrophages. May also have antimicrobial activity. The chain is Hepcidin (hamp) from Oncorhynchus mykiss (Rainbow trout).